The following is a 288-amino-acid chain: Rhox homeobox family member 2 (288 aa).

Residues 16-136 (SPAVDDEKEL…GLEPGNAQQP (121 aa)) are disordered. A compositionally biased stretch (acidic residues) spans 39 to 48 (VKEEEEDAQP). Positions 68–80 (GEEKDGGGEEKDG) are enriched in basic and acidic residues. Residues 134–193 (QQPNVHAFTPLQLQELERIFQREQFPSEFLRRRLARSMNVTELAVQIWFENRRAKWRRHQ) constitute a DNA-binding region (homeobox). Positions 186–195 (RAKWRRHQRA) match the Nuclear localization signal motif.

Belongs to the paired-like homeobox family. PEPP subfamily. Testis. Not detected in epididymis nor placenta. In testis, mainly expressed in germ cells, but also detected in somatic cells such as Sertoli cells, Leydig cells and peritubular cells.

The protein localises to the nucleus. Functionally, transcription factor maybe involved in reproductive processes. Modulates expression of target genes encoding proteins involved in processes relevant to spermatogenesis. The protein is Rhox homeobox family member 2 of Homo sapiens (Human).